Consider the following 23-residue polypeptide: Toxin Acra2 (23 aa).

Residues 2–23 (KDGYIVDSNGCAPECFPTNXGC) form the LCN-type CS-alpha/beta domain.

Post-translationally, contains 4 disulfide bonds. As to expression, expressed by the venom gland.

It localises to the secreted. Its function is as follows. Excitatory insect toxins induce a spastic paralysis. They bind voltage-independently at site-4 of sodium channels (Nav) and shift the voltage of activation toward more negative potentials thereby affecting sodium channel activation and promoting spontaneous and repetitive firing. Is lethal to mice. Is about 1% of the total protein in the venom. The polypeptide is Toxin Acra2 (Androctonus crassicauda (Arabian fat-tailed scorpion)).